Consider the following 459-residue polypeptide: Glycosyl hydrolase family 109 protein (459 aa).

Residues 1 to 31 constitute a signal peptide (tat-type signal); sequence MHNIHRRHFLKAAGAVTAGLITANITASTHA. NAD(+)-binding positions include 64-65, D86, 135-138, 155-156, and N184; these read ER, WEWH, and EV. Residues Y213, R232, 244–247, and Y326 each bind substrate; that span reads YPTH. Y244 is a binding site for NAD(+).

Belongs to the Gfo/Idh/MocA family. Glycosyl hydrolase 109 subfamily. The cofactor is NAD(+). In terms of processing, predicted to be exported by the Tat system. The position of the signal peptide cleavage has not been experimentally proven.

Its function is as follows. Glycosidase. This Shewanella putrefaciens (strain CN-32 / ATCC BAA-453) protein is Glycosyl hydrolase family 109 protein.